Reading from the N-terminus, the 142-residue chain is Transcription antitermination protein NusB (142 aa).

Belongs to the NusB family. In terms of assembly, monomer or homodimer; in equilibrium, with a preference for the monomer. Dimerization may be employed to package NusB in an inactive form until recruitment into antitermination complexes.

Involved in transcription antitermination. Required for transcription of ribosomal RNA (rRNA) genes. Binds specifically to the boxA antiterminator sequence of the ribosomal RNA (rrn) operons. This is Transcription antitermination protein NusB from Thermotoga maritima (strain ATCC 43589 / DSM 3109 / JCM 10099 / NBRC 100826 / MSB8).